Consider the following 262-residue polypeptide: Steroid 5-alpha-reductase DET2 (262 aa).

Transmembrane regions (helical) follow at residues cysteine 13–alanine 33, isoleucine 51–glycine 71, serine 79–leucine 99, phenylalanine 113–alanine 133, tryptophan 148–isoleucine 168, and alanine 205–leucine 225.

This sequence belongs to the steroid 5-alpha reductase family.

Its subcellular location is the membrane. It carries out the reaction a 3-oxo-5alpha-steroid + NADP(+) = a 3-oxo-Delta(4)-steroid + NADPH + H(+). The enzyme catalyses 5alpha-campestan-3-one + NADP(+) = campest-4-en-3-one + NADPH + H(+). The catalysed reaction is (22S,24R)-22-hydroxy-5alpha-ergostan-3-one + NADP(+) = (22S)-22-hydroxycampest-4-en-3-one + NADPH + H(+). It catalyses the reaction 3-dehydro-6-deoxoteasterone + NADP(+) = (22R,23R)-22,23-dihydroxycampest-4-en-3-one + NADPH + H(+). Its pathway is plant hormone biosynthesis; brassinosteroid biosynthesis. With respect to regulation, inhibited by the 4-azasteroids 4-MA. Functionally, involved in a reduction step in the biosynthesis of the plant steroid, brassinolide (BL); acts at the second step in brassinolide biosynthesis in the 5alpha-reduction of (24R)- 24-methylcholest-4-en-3-one, which is further modified to form campestanol. Can use progesterone, testosterone, androstenedione and campestenone as substrate. Also catalyzes the conversion of campest-4-en-3-one (campesta-4-en-3-one, 4-en-3-one) to campest-3-one (campesta-3-one, 3-one), of (22S,24R)-22-hydroxyergost-4-en-3-one (22-hydroxy-campesta-4-en-3-one, 22-OH-4-en-3-one) to (22S,24R)-22-hydroxy-5alpha-ergostan-3-one (22-hydroxy-campesta-3-one, 22-OH-3-one), and of (22R,23R)-22,23-dihydroxy-5alpha-campestan-3-one (22,23,diOH-4-en-3-one) to (22R,23R)-22,23-dihydroxycampest-4-en-3-one (6-deoxo3DT). Required for the brassinosteroid- (BR) dependent regulation of seed size and shape as well as embryo development. In Arabidopsis thaliana (Mouse-ear cress), this protein is Steroid 5-alpha-reductase DET2.